The primary structure comprises 217 residues: 3,4-dihydroxy-2-butanone 4-phosphate synthase (217 aa).

Residues 37–38, Asp42, 150–154, and Glu174 contribute to the D-ribulose 5-phosphate site; these read RE and RQGHT. Residue Glu38 coordinates Mg(2+). His153 contributes to the Mg(2+) binding site.

The protein belongs to the DHBP synthase family. In terms of assembly, homodimer. It depends on Mg(2+) as a cofactor. The cofactor is Mn(2+).

It catalyses the reaction D-ribulose 5-phosphate = (2S)-2-hydroxy-3-oxobutyl phosphate + formate + H(+). The protein operates within cofactor biosynthesis; riboflavin biosynthesis; 2-hydroxy-3-oxobutyl phosphate from D-ribulose 5-phosphate: step 1/1. Its function is as follows. Catalyzes the conversion of D-ribulose 5-phosphate to formate and 3,4-dihydroxy-2-butanone 4-phosphate. This chain is 3,4-dihydroxy-2-butanone 4-phosphate synthase, found in Desulforamulus reducens (strain ATCC BAA-1160 / DSM 100696 / MI-1) (Desulfotomaculum reducens).